We begin with the raw amino-acid sequence, 127 residues long: Major sperm protein 49 (127 aa).

Position 2 is an N-acetylalanine (alanine 2). The 118-residue stretch at 9-126 folds into the MSP domain; it reads DIQTQPGTKI…RRKNLPIEYN (118 aa).

As to expression, sperm.

Its subcellular location is the cell projection. It is found in the pseudopodium. The protein localises to the cytoplasm. The protein resides in the cytoskeleton. Central component in molecular interactions underlying sperm crawling. Forms an extensive filament system that extends from sperm villipoda, along the leading edge of the pseudopod. This chain is Major sperm protein 49 (msp-49), found in Caenorhabditis elegans.